The following is a 168-amino-acid chain: Cysteine-rich perinuclear theca protein 1 (168 aa).

Residues 144 to 168 (NVSDPEEVPPCLDSDPFPNGDLASS) form a disordered region.

In terms of tissue distribution, specifically expressed in spermatozoa (at protein level). Detected from the elongated spermatid stage onwards; not found in immature germ cells or somatic cells (at protein level).

The protein resides in the cytoplasm. Its subcellular location is the cytoskeleton. The protein localises to the perinuclear theca. This Mus musculus (Mouse) protein is Cysteine-rich perinuclear theca protein 1.